Here is a 372-residue protein sequence, read N- to C-terminus: D-alanine--D-alanine ligase (372 aa).

The region spanning 145–349 (KTVLRAGGIP…CPNLLDQLIE (205 aa)) is the ATP-grasp domain. 176-231 (DRWGTSELFVKAVSLGSSVATLPVKTETEFTKAVKEVFRYDDRLMVEPRIRGREIE) is an ATP binding site. Mg(2+) is bound by residues aspartate 303, glutamate 316, and asparagine 318.

Belongs to the D-alanine--D-alanine ligase family. It depends on Mg(2+) as a cofactor. Mn(2+) is required as a cofactor.

It is found in the cytoplasm. It carries out the reaction 2 D-alanine + ATP = D-alanyl-D-alanine + ADP + phosphate + H(+). It functions in the pathway cell wall biogenesis; peptidoglycan biosynthesis. Its function is as follows. Cell wall formation. This Coxiella burnetii (strain CbuK_Q154) (Coxiella burnetii (strain Q154)) protein is D-alanine--D-alanine ligase.